Consider the following 379-residue polypeptide: Cathepsin B-like protease 1 (379 aa).

A signal peptide spans 1–30 (MADSCCIRLHLLASVFLLLFSSFNLQGIAA). A propeptide spans 31–102 (ENLSKQKLTS…PIVRHDLSLK (72 aa)) (activation peptide). Residues Asn-32 and Asn-69 are each glycosylated (N-linked (GlcNAc...) asparagine). Cystine bridges form between Cys-116–Cys-165, Cys-148–Cys-191, Cys-182–Cys-236, Cys-183–Cys-187, Cys-213–Cys-240, and Cys-222–Cys-227. Cys-151 is a catalytic residue. Asn-171 is a glycosylation site (N-linked (GlcNAc...) asparagine). Catalysis depends on residues His-306 and Asn-327. Asn-330 carries an N-linked (GlcNAc...) asparagine glycan. The propeptide at 363–379 (NVFKGITTSDDLLVSSV) is removed in mature form.

The protein belongs to the peptidase C1 family.

Thiol protease that plays a central role in plant programmed cell death (PCD). In addition to its role in protein degradation, may cleave and/or degrade a number of target proteins, activating signaling towards PCD. Contributes to the increase of caspase-3-like activity after UV-C-induced PCD and is required for abiotic stress-induced PCD. Functions redundantly with CATHB2 and CATHB3 in basal defense and distinct forms of plant programmed cell death (PCD). Participates in the establishment of basal resistance against the bacterial pathogen Pseudomonase syringae pv. tomato DC3000. Required for full levels of PCD during resistance (R) gene-mediated hypersensitive response (HR). Involved in the regulation of senescence, a developmental form of PCD in plants. This is Cathepsin B-like protease 1 from Arabidopsis thaliana (Mouse-ear cress).